The primary structure comprises 222 residues: Probable nicotinate-nucleotide adenylyltransferase (222 aa).

This sequence belongs to the NadD family.

The enzyme catalyses nicotinate beta-D-ribonucleotide + ATP + H(+) = deamido-NAD(+) + diphosphate. It participates in cofactor biosynthesis; NAD(+) biosynthesis; deamido-NAD(+) from nicotinate D-ribonucleotide: step 1/1. Its function is as follows. Catalyzes the reversible adenylation of nicotinate mononucleotide (NaMN) to nicotinic acid adenine dinucleotide (NaAD). This chain is Probable nicotinate-nucleotide adenylyltransferase, found in Xylella fastidiosa (strain M23).